Here is a 381-residue protein sequence, read N- to C-terminus: NF-kappa-B inhibitor-like protein 1 (381 aa).

The segment at 1-34 (MSNPSPQVPEEEASTSVCRPKSSMASTSRRQRRE) is disordered. 2 ANK repeats span residues 64 to 93 (GQPP…DPAH) and 97 to 133 (HGDT…IKNK). Disordered stretches follow at residues 131 to 167 (KNKD…EWRQ), 186 to 242 (GDAS…QEEE), and 256 to 294 (ELRE…RGSL). Ser150 carries the phosphoserine modification. Residues 150-159 (SAEEEEEDDA) are compositionally biased toward acidic residues. Over residues 256–287 (ELRESRARRAQEALGDREPKPARAGPRAEHPR) the composition is skewed to basic and acidic residues.

In terms of assembly, interacts with CACTIN (via N-terminal domain); the interaction occurs in a pro-inflammatory-independent manner.

It is found in the nucleus. Involved in the regulation of innate immune response. Acts as negative regulator of Toll-like receptor and interferon-regulatory factor (IRF) signaling pathways. Contributes to the negative regulation of transcriptional activation of NF-kappa-B target genes in response to endogenous pro-inflammatory stimuli. The protein is NF-kappa-B inhibitor-like protein 1 (NFKBIL1) of Macaca mulatta (Rhesus macaque).